An 88-amino-acid chain; its full sequence is Small ribosomal subunit protein uS15 (88 aa).

It belongs to the universal ribosomal protein uS15 family. Part of the 30S ribosomal subunit. Forms a bridge to the 50S subunit in the 70S ribosome, contacting the 23S rRNA.

Functionally, one of the primary rRNA binding proteins, it binds directly to 16S rRNA where it helps nucleate assembly of the platform of the 30S subunit by binding and bridging several RNA helices of the 16S rRNA. Its function is as follows. Forms an intersubunit bridge (bridge B4) with the 23S rRNA of the 50S subunit in the ribosome. In Syntrophus aciditrophicus (strain SB), this protein is Small ribosomal subunit protein uS15.